We begin with the raw amino-acid sequence, 192 residues long: Pyridoxal 5'-phosphate synthase subunit PdxT (192 aa).

Residue 47–49 (GES) coordinates L-glutamine. Cys79 functions as the Nucleophile in the catalytic mechanism. Residues Arg106 and 134–135 (IR) contribute to the L-glutamine site. Residues His170 and Glu172 each act as charge relay system in the active site.

Belongs to the glutaminase PdxT/SNO family. As to quaternary structure, in the presence of PdxS, forms a dodecamer of heterodimers. Only shows activity in the heterodimer.

It carries out the reaction aldehydo-D-ribose 5-phosphate + D-glyceraldehyde 3-phosphate + L-glutamine = pyridoxal 5'-phosphate + L-glutamate + phosphate + 3 H2O + H(+). The catalysed reaction is L-glutamine + H2O = L-glutamate + NH4(+). It participates in cofactor biosynthesis; pyridoxal 5'-phosphate biosynthesis. Functionally, catalyzes the hydrolysis of glutamine to glutamate and ammonia as part of the biosynthesis of pyridoxal 5'-phosphate. The resulting ammonia molecule is channeled to the active site of PdxS. This chain is Pyridoxal 5'-phosphate synthase subunit PdxT, found in Geobacillus sp. (strain WCH70).